The following is a 207-amino-acid chain: Large ribosomal subunit protein uL4 (207 aa).

Residues 49 to 78 (HAVKNRSAVSGGGRKPWRQKGTGRARQGSI) form a disordered region.

It belongs to the universal ribosomal protein uL4 family. Part of the 50S ribosomal subunit.

Its function is as follows. One of the primary rRNA binding proteins, this protein initially binds near the 5'-end of the 23S rRNA. It is important during the early stages of 50S assembly. It makes multiple contacts with different domains of the 23S rRNA in the assembled 50S subunit and ribosome. In terms of biological role, forms part of the polypeptide exit tunnel. This Streptococcus pneumoniae serotype 2 (strain D39 / NCTC 7466) protein is Large ribosomal subunit protein uL4.